The chain runs to 642 residues: Threonine--tRNA ligase (642 aa).

A TGS domain is found at 1–61; that stretch reads MPIITLPDGS…TEDAELQLIT (61 aa). The tract at residues 242-535 is catalytic; sequence DHRKLGKSLD…LVEHYEGKFP (294 aa). Positions 333, 384, and 512 each coordinate Zn(2+).

It belongs to the class-II aminoacyl-tRNA synthetase family. As to quaternary structure, homodimer. Zn(2+) is required as a cofactor.

It is found in the cytoplasm. The enzyme catalyses tRNA(Thr) + L-threonine + ATP = L-threonyl-tRNA(Thr) + AMP + diphosphate + H(+). In terms of biological role, catalyzes the attachment of threonine to tRNA(Thr) in a two-step reaction: L-threonine is first activated by ATP to form Thr-AMP and then transferred to the acceptor end of tRNA(Thr). Also edits incorrectly charged L-seryl-tRNA(Thr). This Hydrogenovibrio crunogenus (strain DSM 25203 / XCL-2) (Thiomicrospira crunogena) protein is Threonine--tRNA ligase.